A 426-amino-acid chain; its full sequence is Glutamate-1-semialdehyde 2,1-aminomutase (426 aa).

An N6-(pyridoxal phosphate)lysine modification is found at lysine 265.

This sequence belongs to the class-III pyridoxal-phosphate-dependent aminotransferase family. HemL subfamily. Homodimer. It depends on pyridoxal 5'-phosphate as a cofactor.

Its subcellular location is the cytoplasm. It catalyses the reaction (S)-4-amino-5-oxopentanoate = 5-aminolevulinate. The protein operates within porphyrin-containing compound metabolism; protoporphyrin-IX biosynthesis; 5-aminolevulinate from L-glutamyl-tRNA(Glu): step 2/2. This chain is Glutamate-1-semialdehyde 2,1-aminomutase, found in Pectobacterium carotovorum subsp. carotovorum (strain PC1).